A 228-amino-acid polypeptide reads, in one-letter code: Cytochrome c oxidase subunit 2 (228 aa).

Over 1–14 the chain is Mitochondrial intermembrane; the sequence is MANHSQLGFQDASS. A helical membrane pass occupies residues 15 to 45; sequence PIMEELVEFHDHALIVALAICSLVLYLLAHM. Over 46 to 58 the chain is Mitochondrial matrix; that stretch reads LMEKLSSNAVDAQ. Residues 59 to 86 form a helical membrane-spanning segment; sequence EVELIWTILPAIVLVLLALPSLQILYMM. The Mitochondrial intermembrane portion of the chain corresponds to 87–228; it reads DEIDEPDLTL…EAWSSLLSSS (142 aa). Cu cation-binding residues include His-160, Cys-195, Glu-197, Cys-199, His-203, and Met-206. Glu-197 contributes to the Mg(2+) binding site.

This sequence belongs to the cytochrome c oxidase subunit 2 family. Component of the cytochrome c oxidase (complex IV, CIV), a multisubunit enzyme composed of 14 subunits. The complex is composed of a catalytic core of 3 subunits MT-CO1, MT-CO2 and MT-CO3, encoded in the mitochondrial DNA, and 11 supernumerary subunits COX4I, COX5A, COX5B, COX6A, COX6B, COX6C, COX7A, COX7B, COX7C, COX8 and NDUFA4, which are encoded in the nuclear genome. The complex exists as a monomer or a dimer and forms supercomplexes (SCs) in the inner mitochondrial membrane with NADH-ubiquinone oxidoreductase (complex I, CI) and ubiquinol-cytochrome c oxidoreductase (cytochrome b-c1 complex, complex III, CIII), resulting in different assemblies (supercomplex SCI(1)III(2)IV(1) and megacomplex MCI(2)III(2)IV(2)). Found in a complex with TMEM177, COA6, COX18, COX20, SCO1 and SCO2. Interacts with TMEM177 in a COX20-dependent manner. Interacts with COX20. Interacts with COX16. It depends on Cu cation as a cofactor.

It is found in the mitochondrion inner membrane. The enzyme catalyses 4 Fe(II)-[cytochrome c] + O2 + 8 H(+)(in) = 4 Fe(III)-[cytochrome c] + 2 H2O + 4 H(+)(out). Component of the cytochrome c oxidase, the last enzyme in the mitochondrial electron transport chain which drives oxidative phosphorylation. The respiratory chain contains 3 multisubunit complexes succinate dehydrogenase (complex II, CII), ubiquinol-cytochrome c oxidoreductase (cytochrome b-c1 complex, complex III, CIII) and cytochrome c oxidase (complex IV, CIV), that cooperate to transfer electrons derived from NADH and succinate to molecular oxygen, creating an electrochemical gradient over the inner membrane that drives transmembrane transport and the ATP synthase. Cytochrome c oxidase is the component of the respiratory chain that catalyzes the reduction of oxygen to water. Electrons originating from reduced cytochrome c in the intermembrane space (IMS) are transferred via the dinuclear copper A center (CU(A)) of subunit 2 and heme A of subunit 1 to the active site in subunit 1, a binuclear center (BNC) formed by heme A3 and copper B (CU(B)). The BNC reduces molecular oxygen to 2 water molecules using 4 electrons from cytochrome c in the IMS and 4 protons from the mitochondrial matrix. This Anas platyrhynchos (Mallard) protein is Cytochrome c oxidase subunit 2 (MT-CO2).